A 246-amino-acid polypeptide reads, in one-letter code: Acetoacetate decarboxylase (246 aa).

Catalysis depends on Lys-115, which acts as the Schiff-base intermediate with acetoacetate.

It belongs to the ADC family.

It carries out the reaction acetoacetate + H(+) = acetone + CO2. Its function is as follows. Catalyzes the conversion of acetoacetate to acetone and carbon dioxide. The sequence is that of Acetoacetate decarboxylase from Clostridium beijerinckii (Clostridium MP).